The primary structure comprises 206 residues: Orotate phosphoribosyltransferase (206 aa).

Residues Arg114, Lys115, Lys118, His120, and 141 to 149 contribute to the 5-phospho-alpha-D-ribose 1-diphosphate site; that span reads EDVVTTGQS. Orotate contacts are provided by Thr145 and Arg173.

It belongs to the purine/pyrimidine phosphoribosyltransferase family. PyrE subfamily. In terms of assembly, homodimer. It depends on Mg(2+) as a cofactor.

The enzyme catalyses orotidine 5'-phosphate + diphosphate = orotate + 5-phospho-alpha-D-ribose 1-diphosphate. The protein operates within pyrimidine metabolism; UMP biosynthesis via de novo pathway; UMP from orotate: step 1/2. Functionally, catalyzes the transfer of a ribosyl phosphate group from 5-phosphoribose 1-diphosphate to orotate, leading to the formation of orotidine monophosphate (OMP). The chain is Orotate phosphoribosyltransferase from Nostoc sp. (strain PCC 7120 / SAG 25.82 / UTEX 2576).